Here is a 317-residue protein sequence, read N- to C-terminus: Ribosomal protein L11 methyltransferase (317 aa).

S-adenosyl-L-methionine contacts are provided by Thr-158, Gly-179, Asp-201, and Asn-244.

This sequence belongs to the methyltransferase superfamily. PrmA family.

It is found in the cytoplasm. It catalyses the reaction L-lysyl-[protein] + 3 S-adenosyl-L-methionine = N(6),N(6),N(6)-trimethyl-L-lysyl-[protein] + 3 S-adenosyl-L-homocysteine + 3 H(+). In terms of biological role, methylates ribosomal protein L11. This Streptococcus uberis (strain ATCC BAA-854 / 0140J) protein is Ribosomal protein L11 methyltransferase.